Here is a 550-residue protein sequence, read N- to C-terminus: MADVFEFELEGHESQASPQRHAYHYDNCTEIMEDDHMYSNVADGQISAPPPSSSYMEDPMMESIQLCASAINPPNVRVGPEDFQLLKVLGKGGYGKVFQVRKTTGSDNGQIFAMKVLQKATIVRNQKDTAHTKAERNILEAVKSPFICDLLYAFQTGGKLYLILEYLSGGELFMHLEREGMFMENVAKFYLSEIVVSLEHLHQQGIIYRDLKPENILLDAYGHVKLTDFGLCKEEIEGDQKTHTFCGTIEYMAPEILMRCGHGKAVDWWSLGALMFDMLTGGPPFTAENRRKTIDKILKGRLTLPAYLSNEARDLIKKLLKRHVDTRLGAGLSDAEEIKSHAFFKTTDWNLVYARQLEAPFKPNIENDEDTSLFDARFTKMTPVDSPCETNFSLNGDNPFVGFTYVAPSVLEMMNKGGHGGISVAHLASSMSRAGAAKSPRKPGDPETASILHGGHSNLFGHGPNSEAPQAFGYGIGSQMTTTTAGGAGIQQPYQSFSGGYPEDDAMDTSTPRASESRETTTGNGSTTTTRPSNVGSSASTPIPLPKRVM.

One can recognise a Protein kinase domain in the interval 83-344 (FQLLKVLGKG…AEEIKSHAFF (262 aa)). ATP contacts are provided by residues 89–97 (LGKGGYGKV) and K115. D210 (proton acceptor) is an active-site residue. Residues 345 to 415 (KTTDWNLVYA…VAPSVLEMMN (71 aa)) enclose the AGC-kinase C-terminal domain. At T404 the chain carries Phosphothreonine. Disordered regions lie at residues 433-466 (RAGA…GPNS) and 484-550 (TAGG…KRVM). A Phosphoserine modification is found at S439. Over residues 520 to 534 (TTTGNGSTTTTRPSN) the composition is skewed to low complexity.

Belongs to the protein kinase superfamily. AGC Ser/Thr protein kinase family. S6 kinase subfamily. The cofactor is Mg(2+). Post-translationally, may be phosphorylated on Thr-404 by let-363/TOR.

It localises to the cell projection. It is found in the axon. The protein resides in the perikaryon. It carries out the reaction L-seryl-[protein] + ATP = O-phospho-L-seryl-[protein] + ADP + H(+). The catalysed reaction is L-threonyl-[protein] + ATP = O-phospho-L-threonyl-[protein] + ADP + H(+). In terms of biological role, serine/threonine-protein kinase which regulates mRNA translation. Negatively regulates lifespan and resistance to starvation, oxidative stress, protein aggregation and P.aeruginosa-mediated infection. May regulate these processes by preventing the activation of transcription factor hif-1. Required, probably downstream of let-363/TOR, for the establishment of the proper number of germline progenitors by promoting cell cycle progression and preventing differentiation during larval development. Regulates germ cell size. In addition required for sperm production and embryo viability. Involved in axon regeneration of PLM and ALM neurons by inhibiting growth cone formation early after axotomy and later by inhibiting axon extension. Functions in axon regeneration and lifespan probably by preventing aak-2/AMPK activation. Negatively regulates autophagy. This chain is Ribosomal protein S6 kinase beta, found in Caenorhabditis elegans.